Consider the following 309-residue polypeptide: L-lactate dehydrogenase 2 (309 aa).

NAD(+) contacts are provided by residues valine 16, aspartate 37, tyrosine 67, and 81–82; that span reads GV. Arginine 90 contributes to the substrate binding site. Serine 103 lines the NAD(+) pocket. 122-125 contributes to the substrate binding site; it reads NPVD. Threonine 145 serves as a coordination point for NAD(+). 150–153 is a binding site for substrate; it reads DTAR. The active-site Proton acceptor is histidine 177. Threonine 227 contacts substrate.

It belongs to the LDH/MDH superfamily. LDH family. As to quaternary structure, homotetramer.

Its subcellular location is the cytoplasm. It catalyses the reaction (S)-lactate + NAD(+) = pyruvate + NADH + H(+). Its pathway is fermentation; pyruvate fermentation to lactate; (S)-lactate from pyruvate: step 1/1. Its function is as follows. Catalyzes the conversion of lactate to pyruvate. This chain is L-lactate dehydrogenase 2, found in Lactiplantibacillus plantarum (strain ATCC BAA-793 / NCIMB 8826 / WCFS1) (Lactobacillus plantarum).